The chain runs to 181 residues: uncharacterized protein (181 aa).

The N-acetyltransferase domain maps to 1–159 (MTVHHFTFHI…KACWMMQSLT (159 aa)).

This sequence belongs to the acetyltransferase family.

This is an uncharacterized protein from Escherichia coli (strain K12).